A 730-amino-acid polypeptide reads, in one-letter code: Sodium-dependent neutral amino acid transporter B(0)AT2 (730 aa).

The disordered stretch occupies residues 1-24 (MPKNSKVVKRELDDDVTESVKDLL). Residues 1–70 (MPKNSKVVKR…RPAWSSKLQY (70 aa)) are Extracellular-facing. Phosphoserine occurs at positions 25 and 55. 3 helical membrane-spanning segments follow: residues 71–91 (ILAQVGFSVGLGNVWRFPYLC), 97–117 (GAYLLPYLILLMVIGIPLFFL), and 149–169 (VVCYFVALYYNVIIGWSLFYF). Residues 170–223 (SQSFQQPLPWDQCPLVKNASHTFVEPECEQSSATTYYWYREALNISSSISESGG) are Cytoplasmic-facing. The next 2 membrane-spanning stretches (helical) occupy residues 224 to 244 (LNWKMTICLLAAWVMVCLAMI) and 253 to 273 (IIYFSSLFPYVVLICFLIRAL). N-linked (GlcNAc...) asparagine glycosylation is present at Asn276. 2 helical membrane-spanning segments follow: residues 302–322 (AATQVFFALGLGFGGVIAFSS) and 335–355 (VLVSFINFFTSVLATLVVFAV). At 356 to 458 (LGFKANVINE…AMTHFPASPF (103 aa)) the chain is on the cytoplasmic side. 5 helical membrane-spanning segments follow: residues 459–479 (WSVMFFLMLVNLGLGSMFGTI), 494–514 (KEILTVICCLLAFCIGLIFVQ), 530–550 (TLPLLIVVILENIAVCFVYGI), 575–595 (YVSPLMLLSLLIASVVNMGLS), and 619–639 (LVVCVSLVVFAVLPVPVVFIV). Over 640 to 730 (RRFNLIDDSS…IMPDMPESDL (91 aa)) the chain is Extracellular. 3 positions are modified to phosphoserine: Ser687, Ser699, and Ser701.

This sequence belongs to the sodium:neurotransmitter symporter (SNF) (TC 2.A.22) family. SLC6A15 subfamily.

Its subcellular location is the membrane. It carries out the reaction L-leucine(in) + Na(+)(in) = L-leucine(out) + Na(+)(out). It catalyses the reaction L-isoleucine(in) + Na(+)(in) = L-isoleucine(out) + Na(+)(out). The enzyme catalyses L-methionine(in) + Na(+)(in) = L-methionine(out) + Na(+)(out). The catalysed reaction is L-proline(in) + Na(+)(in) = L-proline(out) + Na(+)(out). It carries out the reaction L-alanine(in) + Na(+)(in) = L-alanine(out) + Na(+)(out). It catalyses the reaction L-asparagine(in) + Na(+)(in) = L-asparagine(out) + Na(+)(out). The enzyme catalyses L-valine(in) + Na(+)(in) = L-valine(out) + Na(+)(out). The catalysed reaction is L-cysteine(in) + Na(+)(in) = L-cysteine(out) + Na(+)(out). It carries out the reaction L-glutamine(in) + Na(+)(in) = L-glutamine(out) + Na(+)(out). It catalyses the reaction L-serine(in) + Na(+)(in) = L-serine(out) + Na(+)(out). The enzyme catalyses L-threonine(in) + Na(+)(in) = L-threonine(out) + Na(+)(out). The catalysed reaction is L-pipecolate(in) + Na(+)(in) = L-pipecolate(out) + Na(+)(out). It carries out the reaction L-phenylalanine(in) + Na(+)(in) = L-phenylalanine(out) + Na(+)(out). Functionally, functions as a sodium-dependent neutral amino acid transporter. Exhibits preference for the branched-chain amino acids, particularly leucine, valine and isoleucine and methionine. Can also transport low-affinity substrates such as alanine, phenylalanine, glutamine and pipecolic acid. Mediates the saturable, pH-sensitive and electrogenic cotransport of proline and sodium ions with a stoichiometry of 1:1. May have a role as transporter for neurotransmitter precursors into neurons. In contrast to other members of the neurotransmitter transporter family, does not appear to be chloride-dependent. This Pongo abelii (Sumatran orangutan) protein is Sodium-dependent neutral amino acid transporter B(0)AT2 (SLC6A15).